A 387-amino-acid chain; its full sequence is Oleoyl-12-hydroxylase FAH12 (387 aa).

Positions 1–34 (MGGGGRMSTVITSNNSEKKGGSSHLKRAPHTKPP) are disordered. The next 2 helical transmembrane spans lie at 61–81 (AYDVCLSFLFYSIATNFFPYI) and 88–108 (VAWLVYWLFQGCILTGLWVIG). Positions 109-113 (HECGH) match the Histidine box-1 motif. The chain crosses the membrane as a helical span at residues 121–141 (LADDIVGLIVHSALLVPYFSW). Residues 145–149 (HRRHH) carry the Histidine box-2 motif. The next 3 membrane-spanning stretches (helical) occupy residues 183–203 (VLTLAATLLLGWPLYLAFNVS), 229–249 (IYIADLGIFATTFVLYQATMA), and 253–273 (AWVMRIYGVPLLIVNCFLVMI). Positions 319–323 (HVAHH) match the Histidine box-3 motif.

It belongs to the fatty acid desaturase type 1 family. Expressed in seeds. Barely detected in leaves.

The protein localises to the microsome membrane. The enzyme catalyses a 1-acyl-2-(9Z)-octadecenoyl-sn-glycero-3-phosphocholine + 2 Fe(II)-[cytochrome b5] + O2 + 2 H(+) = a 1-acyl-2-[(R)-12-hydroxyoleoyl]-sn-glycero-3-phosphocholine + 2 Fe(III)-[cytochrome b5] + H2O. It functions in the pathway lipid metabolism; monounsaturated fatty acid biosynthesis. Its activity is regulated as follows. Inhibited by oleoyloxyethyl phosphocholine. In terms of biological role, oleoyl-12-hydroxylase involved in the biosynthesis of ricinoleate (12-hydroxy-cis-9-octadecenoate), the major fatty acid constituent of the oil seeds from castor bean plants. Catalyzes the hydroxylation at the 12-position of 1-acyl-2-oleoyl-sn-glycero-3-phosphocholine (2-oleoyl-PC), which seems to be the actual physiological subtrate. It uses cytochrome b5 as an electron donor. May also be involved in the production of lesquerolic acid (14-hydroxyeicos-cis-ll-enoic acid) in vitro. This Ricinus communis (Castor bean) protein is Oleoyl-12-hydroxylase FAH12.